The following is a 315-amino-acid chain: C1GALT1-specific chaperone 1-like protein (315 aa).

Residues 1–8 (MVSASGTS) are Cytoplasmic-facing. Residues 9 to 29 (FFKGMLLGSISWVLITMFGQI) traverse the membrane as a helical; Signal-anchor for type II membrane protein segment. Topologically, residues 30–315 (HIRHRGQTQD…FLPPVGSEND (286 aa)) are lumenal. 2 N-linked (GlcNAc...) asparagine glycosylation sites follow: Asn55 and Asn301.

It belongs to the glycosyltransferase 31 family. Beta3-Gal-T subfamily.

It is found in the membrane. The sequence is that of C1GALT1-specific chaperone 1-like protein from Homo sapiens (Human).